Reading from the N-terminus, the 477-residue chain is Aspartyl/glutamyl-tRNA(Asn/Gln) amidotransferase subunit B (477 aa).

It belongs to the GatB/GatE family. GatB subfamily. As to quaternary structure, heterotrimer of A, B and C subunits.

It catalyses the reaction L-glutamyl-tRNA(Gln) + L-glutamine + ATP + H2O = L-glutaminyl-tRNA(Gln) + L-glutamate + ADP + phosphate + H(+). The catalysed reaction is L-aspartyl-tRNA(Asn) + L-glutamine + ATP + H2O = L-asparaginyl-tRNA(Asn) + L-glutamate + ADP + phosphate + 2 H(+). Allows the formation of correctly charged Asn-tRNA(Asn) or Gln-tRNA(Gln) through the transamidation of misacylated Asp-tRNA(Asn) or Glu-tRNA(Gln) in organisms which lack either or both of asparaginyl-tRNA or glutaminyl-tRNA synthetases. The reaction takes place in the presence of glutamine and ATP through an activated phospho-Asp-tRNA(Asn) or phospho-Glu-tRNA(Gln). The chain is Aspartyl/glutamyl-tRNA(Asn/Gln) amidotransferase subunit B from Bdellovibrio bacteriovorus (strain ATCC 15356 / DSM 50701 / NCIMB 9529 / HD100).